The chain runs to 518 residues: MDVIGRQHLRQMWDDLAEVYDKKTALIFESAQGKVRQFSYSELNEEINRAANLFHACGIKKGDHVALHLDNCPEFFFCWFGLAKIGAVMVPINARFMYEESAWIINHCQAHFVVTSDNFSPIYQPMLHDKHSPLTQLFLITENCLPTEQGVVDFLSEKAKHPVTLNHHTPLSVDDTAEILFTSGTTSQPKGVVITHYNLRIAGYYSSWQNALREDDIYLTVMPAFHIDCQCTASLPAYSVGATIVLLEKYSARASWKQILKYQATVTECIPMMMRTSMAQPVSPDEKQHKLREVMSYLNLADKEKDASIERLNVRLLTSHGMTETIVGLIGDRPGDKRRWPSIGRPGFCYQAQIRDKQNQQVPNGVVGEICVKGEAGKTLFKEYYNRPDATEKALEPDGWLHTGDYGYRDDEGFFYFVDRSCNMIKRGGENVSCIEIENIIASHPKIQDVAVIGVPDDIRDEAIKAFVVLVDGETLSEEAFFAFCEQNMAKFKVPSAVEFKQGLPRNCSGKVIKKHLQ.

The protein belongs to the ATP-dependent AMP-binding enzyme family.

The enzyme catalyses 4-(trimethylamino)butanoate + ATP + CoA = 4-(trimethylamino)butanoyl-CoA + AMP + diphosphate. The catalysed reaction is crotonobetaine + ATP + CoA = crotonobetainyl-CoA + AMP + diphosphate. It catalyses the reaction (R)-carnitine + ATP + CoA = (R)-carnitinyl-CoA + AMP + diphosphate. Its pathway is amine and polyamine metabolism; carnitine metabolism. In terms of biological role, catalyzes the transfer of CoA to carnitine, generating the initial carnitinyl-CoA needed for the CaiB reaction cycle. Also has activity toward crotonobetaine and gamma-butyrobetaine. This is Crotonobetaine/carnitine--CoA ligase from Proteus sp. (strain LE138).